Here is a 154-residue protein sequence, read N- to C-terminus: Nuclear cap-binding protein subunit 2 (154 aa).

Residues Y10, Y33, 102-106 (RVDWD), 113-117 (RQYGR), and 123-124 (QV) each bind mRNA. The RRM domain maps to 30–108 (CTLYVGNLSF…RLIRVDWDAG (79 aa)).

Belongs to the RRM NCBP2 family. As to quaternary structure, component of the nuclear cap-binding complex (CBC), a heterodimer composed of Cbp80 and Cbp20 that interacts with m7GpppG-capped RNA. Interacts with Ars2.

The protein resides in the nucleus. Functionally, component of the cap-binding complex (CBC), which binds co-transcriptionally to the 5' cap of pre-mRNAs and is involved in various processes such as pre-mRNA splicing and RNA-mediated gene silencing (RNAi). The CBC complex is involved in miRNA-mediated RNA interference via its interaction with Ars2 and is required for primary microRNAs (miRNAs) processing. Also involved in innate immunity via the short interfering RNAs (siRNAs) processing machinery by restricting the viral RNA production. In the CBC complex, Cbp20 recognizes and binds capped RNAs (m7GpppG-capped RNA) but requires Cbp80 to stabilize the movement of its N-terminal loop and lock the CBC into a high affinity cap-binding state with the cap structure. The chain is Nuclear cap-binding protein subunit 2 (Cbp20) from Drosophila persimilis (Fruit fly).